A 286-amino-acid chain; its full sequence is uncharacterized protein (286 aa).

The region spanning 1-58 (MLLEGIETLLVLSKEKTMSRTGSQLYISQSAVSKRIANLEKKLGKKLIVPAGRHIKLT) is the HTH lysR-type domain. Positions 18 to 37 (MSRTGSQLYISQSAVSKRIA) form a DNA-binding region, H-T-H motif.

Belongs to the LysR transcriptional regulatory family.

This is an uncharacterized protein from Vibrio cholerae serotype O1 (strain ATCC 39315 / El Tor Inaba N16961).